The sequence spans 616 residues: Protein decapentaplegic (616 aa).

The signal sequence occupies residues 1–23; the sequence is MRAWILLLAVLATSQPIVQVAST. Residues 24–474 constitute a propeptide that is removed on maturation; sequence EDTSISQRFI…DGRHKARSIR (451 aa). The tract at residues 80 to 188 is disordered; it reads SDSDSDNNNN…TSTESHQSPI (109 aa). Residues 86–105 show a composition bias toward low complexity; sequence NNNNNYKNRNNNNNNLNKGP. Over residues 106-115 the composition is skewed to basic residues; that stretch reads RNNKNKGNKH. The segment covering 116-139 has biased composition (basic and acidic residues); the sequence is SKSDANRQFNEVHKPRTDQLENSK. A glycan (N-linked (GlcNAc...) asparagine) is linked at N147. Over residues 173 to 188 the composition is skewed to polar residues; sequence ATTTALTSTESHQSPI. N360 and N395 each carry an N-linked (GlcNAc...) asparagine glycan. Residues 470–512 are disordered; it reads ARSIRDVSGGGGGGGGAGEGGKGNGGGRNRRHQRRPARRKNHE. Positions 477–496 are enriched in gly residues; the sequence is SGGGGGGGGAGEGGKGNGGG. Residues 497 to 509 are compositionally biased toward basic residues; the sequence is RNRRHQRRPARRK. 3 disulfides stabilise this stretch: C515-C581, C544-C613, and C548-C615. N557 carries N-linked (GlcNAc...) asparagine glycosylation.

This sequence belongs to the TGF-beta family. In terms of assembly, heterodimers of scw/dpp are the active subunit, dpp/dpp homodimers elicit a basal response and scw/scw homodimers alone are ineffective in specifying a dorsal pattern. As to expression, expressed in the imaginal discs associated with establishment of the proximal-distal axis of the appendages, and midgut mesoderm.

The protein resides in the secreted. Its function is as follows. Acts as an extracellular morphogen to establish at least two cellular response thresholds within the dorsal half of the drosophila embryo. Required for the proper development of the embryonic dorsal hypoderm, for viability of larvae and for cell viability of the epithelial cells in the imaginal disks. Acts together with scw. The chain is Protein decapentaplegic (dpp) from Drosophila pseudoobscura pseudoobscura (Fruit fly).